The sequence spans 265 residues: C-type lectin domain family 12 member A (265 aa).

At 1–43 (MSEEVTYADLQFQNSSEMEKIPEIGKFGEKAPPAPSHVWRPAA) the chain is on the cytoplasmic side. Positions 5–10 (VTYADL) match the ITIM motif motif. Tyr7 carries the post-translational modification Phosphotyrosine. Residues 44–64 (LFLTLLCLLLLIGLGVLASMF) traverse the membrane as a helical; Signal-anchor for type II membrane protein segment. Over 65–265 (HVTLKIEMKK…QLGSTYFREA (201 aa)) the chain is Extracellular. 2 N-linked (GlcNAc...) asparagine glycosylation sites follow: Asn88 and Asn98. 4 disulfides stabilise this stretch: Cys118-Cys130, Cys133-Cys144, Cys161-Cys248, and Cys227-Cys240. The C-type lectin domain occupies 140 to 249 (HKDSCYFLSD…CTYKKRMICE (110 aa)). Asn165 is a glycosylation site (N-linked (GlcNAc...) asparagine).

Homodimer; disulfide-linked. Interacts (when the ITIM motif is phosphorylated) with PTPN6 and PTPN11. In terms of processing, phosphorylated at Tyr-7 by SRC in the ITIM motif following ligand-binding, promoting recruitment of tyrosine-protein phosphatases PTPN6 and PTPN11. Post-translationally, highly N-glycosylated; glycosylation varies between cell types. In terms of tissue distribution, preferentially expressed in lymphoid tissues and immune cells, including natural killer (NK) cells, T-cells, dendritic cells and monocytes or macrophages. Detected in spleen macrophage-rich red pulp and in lymph node (at protein level). Detected in peripheral blood leukocytes, dendritic cells, bone marrow, monocytes, mononuclear leukocytes and macrophages.

The protein resides in the cell membrane. Myeloid inhibitory C-type lectin receptor that acts as a negative regulator of myeloid cell activation. Myeloid cell inhibition is required to limit proinflammatory pathways and protect against excessive inflammation. Specifically recognizes and binds various structures, such as neutrophil extracellular traps (NETs) or monosodium urate crystals. Also acts as a pattern-recognition receptor for pathogen-associated molecules, such as plasmodium hemozoin or mycobacterial micolic acid. Ligand-binding induces phosphorylation of its ITIM motif, followed by recruitment of tyrosine-protein phosphatases PTPN6 and PTPN11, which counteract tyrosine-protein kinase SYK, thereby preventing myeloid cell activation. Acts as a pattern-recognition receptor for NETs in neutrophils: specifically recognizes DNA in NETs, leading to inhibit neutrophil activation and limit further NET formation. This regulation is essential for controlling key neutrophil responses and limit NET-mediated inflammatory conditions. Also recognizes dead cells by acting as a receptor for monosodium urate crystals, leading to down-regulate neutrophil activation. Binding to monosodium urate crystals also promotes the type I interferon response. Acts as an inhibitor of natural killer (NK) cell cytotoxicity. Also acts as an ihibitor of dendritic cell maturation in an IL10-dependent manner. This is C-type lectin domain family 12 member A from Homo sapiens (Human).